The following is a 172-amino-acid chain: Peptide methionine sulfoxide reductase MsrA 2 (172 aa).

Cysteine 12 is a catalytic residue.

Belongs to the MsrA Met sulfoxide reductase family.

The enzyme catalyses L-methionyl-[protein] + [thioredoxin]-disulfide + H2O = L-methionyl-(S)-S-oxide-[protein] + [thioredoxin]-dithiol. It carries out the reaction [thioredoxin]-disulfide + L-methionine + H2O = L-methionine (S)-S-oxide + [thioredoxin]-dithiol. Its function is as follows. Has an important function as a repair enzyme for proteins that have been inactivated by oxidation. Catalyzes the reversible oxidation-reduction of methionine sulfoxide in proteins to methionine. In Lactococcus lactis subsp. lactis (strain IL1403) (Streptococcus lactis), this protein is Peptide methionine sulfoxide reductase MsrA 2 (msrA2).